A 339-amino-acid polypeptide reads, in one-letter code: MNTRFLDACWGKPVDRTPVWLMRQAGRYLPDYMRVRSKCTFLELCKTPELAAEVSIQPVDILGVDAAILFSDILTPVEPMGMALDFVPGPVFEHPIRTMADVEKLRIPQMEQDVPYVLETIKILRRELANKVPLIGFGGAPFTLACYMVEGKGSKDWATMKRMMYAAPEVYAALMEKVTMMDMEYLNAQIKAGAQAIQIFDTWGGVLAPSDYEKYVLPYTTKLINGLNRQNVPVIHFVKGAGTMLDSVKRAGGDVMGLDWHINLGKAREVLGDMAVQGNLDPTVLFAPKDVIEQEVKRVLDENAGKPGHIFNLGHGILPTVPPENAIHMVECVHRLSQK.

Residues 23–27 (RQAGR), Asp72, Tyr147, Thr202, and His315 contribute to the substrate site.

This sequence belongs to the uroporphyrinogen decarboxylase family. As to quaternary structure, homodimer.

It is found in the cytoplasm. It carries out the reaction uroporphyrinogen III + 4 H(+) = coproporphyrinogen III + 4 CO2. It participates in porphyrin-containing compound metabolism; protoporphyrin-IX biosynthesis; coproporphyrinogen-III from 5-aminolevulinate: step 4/4. Catalyzes the decarboxylation of four acetate groups of uroporphyrinogen-III to yield coproporphyrinogen-III. The protein is Uroporphyrinogen decarboxylase of Geotalea uraniireducens (strain Rf4) (Geobacter uraniireducens).